The sequence spans 218 residues: Large ribosomal subunit protein uL3 (218 aa).

This sequence belongs to the universal ribosomal protein uL3 family. As to quaternary structure, part of the 50S ribosomal subunit. Forms a cluster with proteins L14 and L19.

Its function is as follows. One of the primary rRNA binding proteins, it binds directly near the 3'-end of the 23S rRNA, where it nucleates assembly of the 50S subunit. In Corynebacterium glutamicum (strain R), this protein is Large ribosomal subunit protein uL3.